Here is a 350-residue protein sequence, read N- to C-terminus: Nicotinate-nucleotide--dimethylbenzimidazole phosphoribosyltransferase (350 aa).

Glu-317 serves as the catalytic Proton acceptor.

It belongs to the CobT family.

The catalysed reaction is 5,6-dimethylbenzimidazole + nicotinate beta-D-ribonucleotide = alpha-ribazole 5'-phosphate + nicotinate + H(+). It functions in the pathway nucleoside biosynthesis; alpha-ribazole biosynthesis; alpha-ribazole from 5,6-dimethylbenzimidazole: step 1/2. Its function is as follows. Catalyzes the synthesis of alpha-ribazole-5'-phosphate from nicotinate mononucleotide (NAMN) and 5,6-dimethylbenzimidazole (DMB). The polypeptide is Nicotinate-nucleotide--dimethylbenzimidazole phosphoribosyltransferase (Shewanella putrefaciens (strain CN-32 / ATCC BAA-453)).